The sequence spans 283 residues: MTIVRKPQWLQKKINPAAHAGMEGLLGELRLHTVCQEARCPNITECFRERQATFLILGAACTRLCSFCNVTKQTPIPPDPGEPDRVAEAIRRLGLSHVVITSPTRDDLPDGGAGHYAETVAAIRSASPATTVELLIPDYLGNRESLARVVASAPAIIGHNVETVPRLYQIRAGADYGRSLGVLRTLRELDPVVRSKSGIMLGLGEAEEEVLAVFADLRSVGCSYLSIGQYLAPSKSHHPVREFIPPECFERYRAAALATGFAHVESGPYVRSSYHAARYDGQL.

[4Fe-4S] cluster is bound by residues Cys-35, Cys-40, Cys-46, Cys-61, Cys-65, Cys-68, and Ser-273. The 216-residue stretch at 47–262 (FRERQATFLI…RAAALATGFA (216 aa)) folds into the Radical SAM core domain.

Belongs to the radical SAM superfamily. Lipoyl synthase family. Requires [4Fe-4S] cluster as cofactor.

The protein resides in the cytoplasm. The catalysed reaction is [[Fe-S] cluster scaffold protein carrying a second [4Fe-4S](2+) cluster] + N(6)-octanoyl-L-lysyl-[protein] + 2 oxidized [2Fe-2S]-[ferredoxin] + 2 S-adenosyl-L-methionine + 4 H(+) = [[Fe-S] cluster scaffold protein] + N(6)-[(R)-dihydrolipoyl]-L-lysyl-[protein] + 4 Fe(3+) + 2 hydrogen sulfide + 2 5'-deoxyadenosine + 2 L-methionine + 2 reduced [2Fe-2S]-[ferredoxin]. The protein operates within protein modification; protein lipoylation via endogenous pathway; protein N(6)-(lipoyl)lysine from octanoyl-[acyl-carrier-protein]: step 2/2. In terms of biological role, catalyzes the radical-mediated insertion of two sulfur atoms into the C-6 and C-8 positions of the octanoyl moiety bound to the lipoyl domains of lipoate-dependent enzymes, thereby converting the octanoylated domains into lipoylated derivatives. The protein is Lipoyl synthase of Geobacter metallireducens (strain ATCC 53774 / DSM 7210 / GS-15).